The chain runs to 336 residues: TBC1 domain family member 21 (336 aa).

The Rab-GAP TBC domain occupies 57–265 (GLHPFVRTEA…RLWEVLLTGK (209 aa)).

As to quaternary structure, interacts with ACTB. Interacts with ARMC12. Interacts with TOMM20 and DNAH7. Interacts with RAP1A. Interacts with RAB10. Expressed in testis, specifically in elongating and elongated spermatids (at protein level). Expressed in the sperm midpiece (at protein level).

Its subcellular location is the cytoplasmic vesicle. The protein localises to the secretory vesicle. It is found in the acrosome. The protein resides in the cytoplasm. It localises to the cytoskeleton. Functionally, acts as a GTPase-activating protein for Rab family protein (s). Essential for the establishment of male fertility, and is required for both the production of normal sperm number and sperm function. Plays an important role in the formation of intact mitochondria, outer dense fibers and axoneme within the sperm tail. Essential for sperm mitochondrial sheath formation and for the interactions of ARMC12 with VDAC2 and VDAC3. May be involved in acrosome formation and cytoskeletal reorganization during spermiogenesis, possibly by regulating RAB3A activity. This is TBC1 domain family member 21 from Mus musculus (Mouse).